The following is a 411-amino-acid chain: Lycopene beta cyclase (411 aa).

A4–P32 is a binding site for NAD(+).

The protein belongs to the lycopene cyclase family. Requires FAD as cofactor.

The catalysed reaction is a carotenoid psi-end group = a carotenoid beta-end derivative. It catalyses the reaction all-trans-lycopene = gamma-carotene. It carries out the reaction gamma-carotene = all-trans-beta-carotene. The enzyme catalyses all-trans-neurosporene = beta-zeacarotene. It functions in the pathway carotenoid biosynthesis; beta-carotene biosynthesis. It participates in carotenoid biosynthesis; beta-zeacarotene biosynthesis. With respect to regulation, inhibited by the bleaching herbicide 2-(4-methylphenoxy)triethylamine hydrochloride (MPTA). Functionally, catalyzes the double cyclization reaction which converts lycopene to beta-carotene. It also converts neurosporene to the monocyclic beta-zeacarotene but does not cyclize zeta-carotene. In Synechococcus elongatus (strain ATCC 33912 / PCC 7942 / FACHB-805) (Anacystis nidulans R2), this protein is Lycopene beta cyclase.